The chain runs to 293 residues: Amine sulfotransferase (293 aa).

46–51 (KSGTIW) provides a ligand contact to 3'-phosphoadenylyl sulfate. The Proton acceptor role is filled by histidine 101. Residues arginine 123, serine 131, 220–225 (ATFQKM), and 252–254 (RKG) each bind 3'-phosphoadenylyl sulfate.

It belongs to the sulfotransferase 1 family.

The protein resides in the cytoplasm. It catalyses the reaction a primary amine + 3'-phosphoadenylyl sulfate = a sulfamate + adenosine 3',5'-bisphosphate + 2 H(+). In terms of biological role, sulfotransferase that utilizes 3'-phospho-5'-adenylyl sulfate (PAPS) as sulfonate donor to catalyze the N-sulfonation of amines. This chain is Amine sulfotransferase (Sult3a1), found in Mus musculus (Mouse).